A 188-amino-acid chain; its full sequence is Ribosome-recycling factor (188 aa).

This sequence belongs to the RRF family.

The protein localises to the cytoplasm. Its function is as follows. Responsible for the release of ribosomes from messenger RNA at the termination of protein biosynthesis. May increase the efficiency of translation by recycling ribosomes from one round of translation to another. This Caulobacter vibrioides (strain NA1000 / CB15N) (Caulobacter crescentus) protein is Ribosome-recycling factor.